The following is a 104-amino-acid chain: L-rhamnose mutarotase (104 aa).

Tyrosine 18 serves as a coordination point for substrate. Histidine 22 acts as the Proton donor in catalysis. Residues tyrosine 41 and 76 to 77 each bind substrate; that span reads WW.

This sequence belongs to the rhamnose mutarotase family. Homodimer.

The protein localises to the cytoplasm. The catalysed reaction is alpha-L-rhamnose = beta-L-rhamnose. It participates in carbohydrate metabolism; L-rhamnose metabolism. Its function is as follows. Involved in the anomeric conversion of L-rhamnose. This chain is L-rhamnose mutarotase, found in Escherichia coli O7:K1 (strain IAI39 / ExPEC).